The primary structure comprises 444 residues: Enolase (444 aa).

Residues His163 and Glu172 each contribute to the substrate site. Glu215 serves as the catalytic Proton donor. Mg(2+) contacts are provided by Asp250, Glu300, and Asp327. Residues Glu300 and Asp327 each coordinate substrate. The active-site Proton acceptor is Lys352. Substrate contacts are provided by residues 379-382 and Lys403; that span reads SHRS.

Belongs to the enolase family. Homodimer. It depends on Mg(2+) as a cofactor.

The protein resides in the cytoplasm. It carries out the reaction (2R)-2-phosphoglycerate = phosphoenolpyruvate + H2O. The protein operates within carbohydrate degradation; glycolysis; pyruvate from D-glyceraldehyde 3-phosphate: step 4/5. This is Enolase (PGH1) from Solanum lycopersicum (Tomato).